The chain runs to 28 residues: Potassium channel toxin kappa-KTx 2.9 (28 aa).

2 cysteine pairs are disulfide-bonded: cysteine 4/cysteine 22 and cysteine 8/cysteine 18.

It belongs to the short scorpion toxin superfamily. Potassium channel inhibitor family. Gamma-KTx 2 subfamily. Post-translationally, contains 2 disulfide bonds. As to expression, expressed by the venom gland.

The protein localises to the secreted. In terms of biological role, reversibly blocks voltage-gated potassium channels Kv1.2/KCNA2 and Kv1.3/KCNA3. The sequence is that of Potassium channel toxin kappa-KTx 2.9 from Pandinus imperator (Emperor scorpion).